Consider the following 227-residue polypeptide: Cleavage and polyadenylation specificity factor subunit 5 (227 aa).

The Nudix hydrolase domain maps to 76-201; it reads MRRTVEGVLI…KLVAAPLFEL (126 aa). The segment at 102 to 104 is interaction with RNA; it reads TFF. Positions 109 to 130 match the Nudix box motif; it reads GELNPGEDEVEGLKRLMTEILG.

It belongs to the Nudix hydrolase family. CPSF5 subfamily. Homodimer (via N- and C-terminus); binds RNA as homodimer. Component of the cleavage factor Im (CFIm) complex.

Its subcellular location is the nucleus. The protein resides in the cytoplasm. In terms of biological role, component of the cleavage factor Im (CFIm) complex that functions as an activator of the pre-mRNA 3'-end cleavage and polyadenylation processing required for the maturation of pre-mRNA into functional mRNAs. CFIm contributes to the recruitment of multiprotein complexes on specific sequences on the pre-mRNA 3'-end, so called cleavage and polyadenylation signals (pA signals). Most pre-mRNAs contain multiple pA signals, resulting in alternative cleavage and polyadenylation (APA) producing mRNAs with variable 3'-end formation. The CFIm complex acts as a key regulator of cleavage and polyadenylation site choice during APA through its binding to 5'-UGUA-3' elements localized in the 3'-untranslated region (UTR) for a huge number of pre-mRNAs. Binds to 5'-UGUA-3' elements localized upstream of pA signals that act as enhancers of pre-mRNA 3'-end processing. The homodimer mediates simultaneous sequence-specific recognition of two 5'-UGUA-3' elements within the pre-mRNA. Plays a role in somatic cell fate transitions and pluripotency by regulating widespread changes in gene expression through an APA-dependent function. Binds to chromatin. Binds to, but does not hydrolyze mono- and di-adenosine nucleotides. In Xenopus laevis (African clawed frog), this protein is Cleavage and polyadenylation specificity factor subunit 5.